The sequence spans 1865 residues: Endoribonuclease Dicer (1865 aa).

The Helicase ATP-binding domain maps to 41–213; that stretch reads LLEAALEHNT…DLEEKIQNLE (173 aa). Residue 54 to 61 participates in ATP binding; it reads LNTGSGKT. Positions 161 to 164 match the DECH box motif; sequence DECH. The segment at 397–417 is disordered; the sequence is SWSDSEDDDEDEEAEAKEKTE. Residues 400-411 show a composition bias toward acidic residues; the sequence is DSEDDDEDEEAE. The Helicase C-terminal domain maps to 419-588; it reads NFPSPFTNIL…SAECNDFELE (170 aa). The region spanning 616–708 is the Dicer dsRNA-binding fold domain; sequence AIGHVNRYCA…MPVGKETVKY (93 aa). The interval 713-732 is disordered; sequence DLHDEEETSVPGRPGSTKRR. The 148-residue stretch at 881–1028 folds into the PAZ domain; sequence KFMEDIEKSE…LVPELCAIHP (148 aa). Polar residues-rich tracts occupy residues 1111–1128 and 1192–1201; these read GTSS…SMEV and STQTTTSVSV. Disordered stretches follow at residues 1111-1142 and 1190-1259; these read GTSS…PDEK and DLST…DCRS. Residues 1240–1252 are compositionally biased toward low complexity; it reads SETATSTPAPSET. The region spanning 1262–1385 is the RNase III 1 domain; that stretch reads AGPAWDSPKT…TDKWDSDENK (124 aa). 3 residues coordinate Mg(2+): E1298, D1377, and D1380. The interval 1373–1417 is disordered; it reads KSSTDKWDSDENKDLANGKASDDEDEDDDDEPEEAEVEPSKEDVN. Positions 1374–1388 are enriched in basic and acidic residues; it reads SSTDKWDSDENKDLA. Residues 1394-1409 are compositionally biased toward acidic residues; it reads DDEDEDDDDEPEEAEV. The region spanning 1609–1767 is the RNase III 2 domain; sequence FLNFESKINY…LAGAIYMDSG (159 aa). Positions 1648, 1753, and 1756 each coordinate Mg(2+). A DRBM domain is found at 1792 to 1857; the sequence is VPRSPVRELL…ARRALRSLKA (66 aa).

The protein belongs to the helicase family. Dicer subfamily. Component of the RISC loading complex (RLC), or micro-RNA (miRNA) loading complex (miRLC), which is composed of dicer1, ago2 and tarbp2; dicer1 and tarbp2 are required to process precursor miRNAs (pre-miRNAs) to mature miRNAs and then load them onto ago2. Note that the trimeric RLC/miRLC is also referred to as RISC. Mg(2+) serves as cofactor. Mn(2+) is required as a cofactor.

Its subcellular location is the cytoplasm. The catalysed reaction is Endonucleolytic cleavage to 5'-phosphomonoester.. In terms of biological role, double-stranded RNA (dsRNA) endoribonuclease playing a central role in short dsRNA-mediated post-transcriptional gene silencing. Cleaves naturally occurring long dsRNAs and short hairpin pre-microRNAs (miRNA) into fragments of twenty-one to twenty-three nucleotides with 3' overhang of two nucleotides, producing respectively short interfering RNAs (siRNA) and mature microRNAs. SiRNAs and miRNAs serve as guide to direct the RNA-induced silencing complex (RISC) to complementary RNAs to degrade them or prevent their translation. Gene silencing mediated by siRNAs, also called RNA interference, controls the elimination of transcripts from mobile and repetitive DNA elements of the genome but also the degradation of exogenous RNA of viral origin for instance. The miRNA pathway on the other side is a mean to specifically regulate the expression of target genes. The sequence is that of Endoribonuclease Dicer (dicer1) from Danio rerio (Zebrafish).